Consider the following 151-residue polypeptide: Superoxide dismutase [Cu-Zn] 2 (151 aa).

Cu cation-binding residues include His44, His46, and His61. Cysteines 55 and 144 form a disulfide. The Zn(2+) site is built by His61, His69, His78, and Asp81. A Cu cation-binding site is contributed by His118.

The protein belongs to the Cu-Zn superoxide dismutase family. Homodimer. The cofactor is Cu cation. Zn(2+) is required as a cofactor.

The protein localises to the cytoplasm. It carries out the reaction 2 superoxide + 2 H(+) = H2O2 + O2. In terms of biological role, destroys radicals which are normally produced within the cells and which are toxic to biological systems. This is Superoxide dismutase [Cu-Zn] 2 (SODCC.1) from Zea mays (Maize).